The following is a 337-amino-acid chain: 2-oxoglutarate-dependent dioxygenase frbA (337 aa).

The Fe2OG dioxygenase domain maps to cysteine 175–proline 290. Residues histidine 202, aspartate 204, and histidine 262 each coordinate Fe cation. 2-oxoglutarate is bound at residue arginine 281.

It belongs to the iron/ascorbate-dependent oxidoreductase family. The cofactor is Fe(2+).

Its pathway is antifungal biosynthesis. 2-oxoglutarate-dependent dioxygenase; part of the gene cluster that mediates the biosynthesis of the antifungal antibiotic FR901469, an inhibitor of beta-1,3-glucansynthase, exerting antifungal activity against the pathogenes Candida albicans and Aspergillus fumigatus. FR901469 is a cyclic depsipeptide containing 12 amino acid residues and a fatty acid chain. The NRPS frbI contains 12 modules responsible for the formation of the depsipeptide backbone which is denoted as Acyl-Thr-Ala-Tyr-Val-4OHPro-Thr-Thr-3OHPro-threo3OHGln-Gly-Thr-Orn-OH (C71H116N14O23). The PKS frbB is probably involved in the production of the hydrocarbon chain, and the acyl-CoA ligase frbC might be involved in the transport of the chain to the peptide ptoduct of frbI. Because FR901469 contains 3 hydroxylated amino acid residues, the 3 oxygenases frbA, frbH, and frbJ might be participating in amino acid hydroxylation. As no thioesterase domains were detected in frbI or frbB, the thioesterases frbD and frbE may instead release and cyclize the products of the NRPS and PKS, respectively. This Dothideomycetidae sp. (strain 11243) (Fungal sp. (strain No.11243)) protein is 2-oxoglutarate-dependent dioxygenase frbA.